Here is a 98-residue protein sequence, read N- to C-terminus: Co-chaperonin GroES (98 aa).

The protein belongs to the GroES chaperonin family. In terms of assembly, heptamer of 7 subunits arranged in a ring. Interacts with the chaperonin GroEL.

Its subcellular location is the cytoplasm. Together with the chaperonin GroEL, plays an essential role in assisting protein folding. The GroEL-GroES system forms a nano-cage that allows encapsulation of the non-native substrate proteins and provides a physical environment optimized to promote and accelerate protein folding. GroES binds to the apical surface of the GroEL ring, thereby capping the opening of the GroEL channel. The chain is Co-chaperonin GroES from Bartonella quintana (strain Toulouse) (Rochalimaea quintana).